We begin with the raw amino-acid sequence, 120 residues long: Protein TCL1B4 (120 aa).

It belongs to the TCL1 family.

This Mus musculus (Mouse) protein is Protein TCL1B4 (Tcl1b4).